Reading from the N-terminus, the 122-residue chain is Large ribosomal subunit protein uL18 (122 aa).

The protein belongs to the universal ribosomal protein uL18 family. In terms of assembly, part of the 50S ribosomal subunit; part of the 5S rRNA/L5/L18/L25 subcomplex. Contacts the 5S and 23S rRNAs.

Functionally, this is one of the proteins that bind and probably mediate the attachment of the 5S RNA into the large ribosomal subunit, where it forms part of the central protuberance. This chain is Large ribosomal subunit protein uL18, found in Prochlorococcus marinus (strain MIT 9301).